We begin with the raw amino-acid sequence, 181 residues long: Adenine phosphoribosyltransferase (181 aa).

This sequence belongs to the purine/pyrimidine phosphoribosyltransferase family. Homodimer.

The protein localises to the cytoplasm. The catalysed reaction is AMP + diphosphate = 5-phospho-alpha-D-ribose 1-diphosphate + adenine. It functions in the pathway purine metabolism; AMP biosynthesis via salvage pathway; AMP from adenine: step 1/1. Its function is as follows. Catalyzes a salvage reaction resulting in the formation of AMP, that is energically less costly than de novo synthesis. This chain is Adenine phosphoribosyltransferase, found in Cytophaga hutchinsonii (strain ATCC 33406 / DSM 1761 / CIP 103989 / NBRC 15051 / NCIMB 9469 / D465).